Reading from the N-terminus, the 184-residue chain is NADH-quinone oxidoreductase subunit B (184 aa).

[4Fe-4S] cluster is bound by residues cysteine 63, cysteine 64, cysteine 128, and cysteine 158.

This sequence belongs to the complex I 20 kDa subunit family. NDH-1 is composed of 14 different subunits. Subunits NuoB, C, D, E, F, and G constitute the peripheral sector of the complex. [4Fe-4S] cluster serves as cofactor.

The protein localises to the cell inner membrane. It catalyses the reaction a quinone + NADH + 5 H(+)(in) = a quinol + NAD(+) + 4 H(+)(out). NDH-1 shuttles electrons from NADH, via FMN and iron-sulfur (Fe-S) centers, to quinones in the respiratory chain. Couples the redox reaction to proton translocation (for every two electrons transferred, four hydrogen ions are translocated across the cytoplasmic membrane), and thus conserves the redox energy in a proton gradient. This chain is NADH-quinone oxidoreductase subunit B, found in Xanthomonas campestris pv. campestris (strain 8004).